The primary structure comprises 208 residues: NAD(P)H-quinone oxidoreductase subunit M, chloroplastic (208 aa).

A chloroplast-targeting transit peptide spans 1–21 (MAATSSYTACTKFSMLGWIGG). Residues 37-49 (QQAEVEESQQVNA) are compositionally biased toward low complexity. Residues 37–70 (QQAEVEESQQVNAQEEEQEKMKQQGKQKLPRPVE) are disordered.

It belongs to the NDH complex subunit M family. Part of the chloroplast NDH complex, composed of a mixture of chloroplast and nucleus encoded subunits. Component of the NDH subcomplex A, at least composed of ndhH, ndhI, ndhJ, ndhK, ndhL, ndhM, ndhN and ndhO.

It localises to the plastid. Its subcellular location is the chloroplast thylakoid membrane. It carries out the reaction a plastoquinone + NADH + (n+1) H(+)(in) = a plastoquinol + NAD(+) + n H(+)(out). The enzyme catalyses a plastoquinone + NADPH + (n+1) H(+)(in) = a plastoquinol + NADP(+) + n H(+)(out). Its function is as follows. NDH shuttles electrons from NAD(P)H:plastoquinone, via FMN and iron-sulfur (Fe-S) centers, to quinones in the photosynthetic chain and possibly in a chloroplast respiratory chain. The immediate electron acceptor for the enzyme in this species is believed to be plastoquinone. Couples the redox reaction to proton translocation, and thus conserves the redox energy in a proton gradient. This chain is NAD(P)H-quinone oxidoreductase subunit M, chloroplastic, found in Vitis vinifera (Grape).